Here is a 135-residue protein sequence, read N- to C-terminus: FK506-binding protein 2 (135 aa).

The signal sequence occupies residues Met1–Ala20. One can recognise a PPIase FKBP-type domain in the interval Gly40 to Glu128. Residues Lys132 to Leu135 carry the Prevents secretion from ER motif.

It belongs to the FKBP-type PPIase family. FKBP2 subfamily.

The protein localises to the endoplasmic reticulum. The enzyme catalyses [protein]-peptidylproline (omega=180) = [protein]-peptidylproline (omega=0). Its activity is regulated as follows. Inhibited by both FK506 and rapamycin. In terms of biological role, PPIases accelerate the folding of proteins. It catalyzes the cis-trans isomerization of proline imidic peptide bonds in oligopeptides. The sequence is that of FK506-binding protein 2 (fkbB) from Emericella nidulans (strain FGSC A4 / ATCC 38163 / CBS 112.46 / NRRL 194 / M139) (Aspergillus nidulans).